We begin with the raw amino-acid sequence, 353 residues long: Photosystem II D2 protein (353 aa).

Thr-2 carries the post-translational modification N-acetylthreonine. The residue at position 2 (Thr-2) is a Phosphothreonine. Residues 41–61 (CAYFALGGWFTGTTFVTSWYT) traverse the membrane as a helical segment. His-118 provides a ligand contact to chlorophyll a. The chain crosses the membrane as a helical span at residues 125–141 (GFMLRQFELARSVQLRP). Residues Gln-130 and Asn-143 each contribute to the pheophytin a site. A helical membrane pass occupies residues 153-166 (VFVSVFLIYPLGQS). Residue His-198 participates in chlorophyll a binding. Residues 208–228 (AALLCAIHGATVENTLFEDGD) traverse the membrane as a helical segment. 2 residues coordinate a plastoquinone: His-215 and Phe-262. Residue His-215 participates in Fe cation binding. His-269 is a Fe cation binding site. Residues 279–295 (GLWMSALGVVGLALNLR) form a helical membrane-spanning segment.

The protein belongs to the reaction center PufL/M/PsbA/D family. As to quaternary structure, PSII is composed of 1 copy each of membrane proteins PsbA, PsbB, PsbC, PsbD, PsbE, PsbF, PsbH, PsbI, PsbJ, PsbK, PsbL, PsbM, PsbT, PsbX, PsbY, PsbZ, Psb30/Ycf12, at least 3 peripheral proteins of the oxygen-evolving complex and a large number of cofactors. It forms dimeric complexes. Interacts with PAM68. The D1/D2 heterodimer binds P680, chlorophylls that are the primary electron donor of PSII, and subsequent electron acceptors. It shares a non-heme iron and each subunit binds pheophytin, quinone, additional chlorophylls, carotenoids and lipids. There is also a Cl(-1) ion associated with D1 and D2, which is required for oxygen evolution. The PSII complex binds additional chlorophylls, carotenoids and specific lipids. serves as cofactor. Phosphorylation occurs in normal plant growth light conditions. Rapid dephosphorylation occurs during heat shock.

The protein resides in the plastid. It localises to the chloroplast thylakoid membrane. The catalysed reaction is 2 a plastoquinone + 4 hnu + 2 H2O = 2 a plastoquinol + O2. Photosystem II (PSII) is a light-driven water:plastoquinone oxidoreductase that uses light energy to abstract electrons from H(2)O, generating O(2) and a proton gradient subsequently used for ATP formation. It consists of a core antenna complex that captures photons, and an electron transfer chain that converts photonic excitation into a charge separation. The D1/D2 (PsbA/PsbD) reaction center heterodimer binds P680, the primary electron donor of PSII as well as several subsequent electron acceptors. D2 is needed for assembly of a stable PSII complex. This is Photosystem II D2 protein from Arabidopsis thaliana (Mouse-ear cress).